Reading from the N-terminus, the 208-residue chain is MVFYFTSSSVNSSAYTIYMGKDKYENEDLIKYGWPEDIWFHVDKLSSAHVYLRLHKGEKIEDIPKEVLMDCAHLVKANSIQGCKMNNVNVVYTPWSNLKKTADMDVGQIGFHRQKDVKIVTVEKKVNEILNRLEKTKMERFPDLEAEKECRDHEERNEKKAQIQEMKRREKEEMKKKREMDELRSYSSLMKVENMSSNQDGNDSDEFM.

Residues methionine 1 to aspartate 105 are Extracellular-facing. Residues lysine 21 to glutamate 25 are DNA-binding. Lysine 23 is subject to N6-acetyllysine. Residues valine 106–valine 122 form a helical membrane-spanning segment. The stretch at valine 117–serine 187 forms a coiled coil. Topologically, residues glutamate 123–methionine 208 are cytoplasmic. Basic and acidic residues predominate over residues glutamate 145 to arginine 184. The segment at glutamate 145–methionine 208 is disordered. Serine 204 carries the phosphoserine modification.

The protein belongs to the CCDC25 family. As to quaternary structure, interacts (via cytoplasmic region) with ILK.

The protein localises to the cell membrane. The protein resides in the endomembrane system. Transmembrane receptor that senses neutrophil extracellular traps (NETs) and triggers the ILK-PARVB pathway to enhance cell motility. NETs are mainly composed of DNA fibers and are released by neutrophils to bind pathogens during inflammation. Formation of NETs is also associated with cancer metastasis, NET-DNA acting as a chemotactic factor to attract cancer cells. Specifically binds NETs on its extracellular region, in particular the 8-OHdG-enriched DNA present in NETs, and recruits ILK, initiating the ILK-PARVB cascade to induce cytoskeleton rearrangement and directional migration of cells. The polypeptide is Coiled-coil domain-containing protein 25 (Bos taurus (Bovine)).